The chain runs to 336 residues: Phospho-N-acetylmuramoyl-pentapeptide-transferase (336 aa).

10 consecutive transmembrane segments (helical) span residues 3 to 23 (LTLI…PYFI), 53 to 73 (GGTV…LFSI), 78 to 98 (SLAL…IGFL), 118 to 138 (LALQ…PSGI), 143 to 163 (VFGY…FWVV), 174 to 194 (GIDG…GVIA), 200 to 220 (FDVL…FCFN), 226 to 246 (VFMG…ISIA), 251 to 271 (WTLL…MLQV), and 316 to 336 (AFLW…LYVF).

The protein belongs to the glycosyltransferase 4 family. MraY subfamily. Mg(2+) is required as a cofactor.

The protein localises to the cell membrane. It catalyses the reaction UDP-N-acetyl-alpha-D-muramoyl-L-alanyl-gamma-D-glutamyl-L-lysyl-D-alanyl-D-alanine + di-trans,octa-cis-undecaprenyl phosphate = Mur2Ac(oyl-L-Ala-gamma-D-Glu-L-Lys-D-Ala-D-Ala)-di-trans,octa-cis-undecaprenyl diphosphate + UMP. The protein operates within cell wall biogenesis; peptidoglycan biosynthesis. Catalyzes the initial step of the lipid cycle reactions in the biosynthesis of the cell wall peptidoglycan: transfers peptidoglycan precursor phospho-MurNAc-pentapeptide from UDP-MurNAc-pentapeptide onto the lipid carrier undecaprenyl phosphate, yielding undecaprenyl-pyrophosphoryl-MurNAc-pentapeptide, known as lipid I. This chain is Phospho-N-acetylmuramoyl-pentapeptide-transferase, found in Streptococcus pyogenes serotype M3 (strain ATCC BAA-595 / MGAS315).